The following is a 234-amino-acid chain: uncharacterized protein (234 aa).

An NADP(+)-binding site is contributed by 10 to 34 (VVTGASSGIGASIAETLANQGVKVV). Ser-143 serves as a coordination point for substrate. Tyr-156 acts as the Proton acceptor in catalysis.

Belongs to the short-chain dehydrogenases/reductases (SDR) family.

This is an uncharacterized protein from Staphylococcus saprophyticus subsp. saprophyticus (strain ATCC 15305 / DSM 20229 / NCIMB 8711 / NCTC 7292 / S-41).